Reading from the N-terminus, the 130-residue chain is MRLKGRKIFGGKVRGTALVSRRPLSFLGGVDPNTGVIIDVESDIRGENVKDKILVFPRGKGSTVGSYIVYQLKKNGVAPKAIVVEEAETIVATGAIIAGIPMVDKIDTSKIRSGQIIEVDADKGEVNVEE.

Serine 62 acts as the Proton acceptor in catalysis.

It belongs to the AcnX type II small subunit family. As to quaternary structure, heterodimer composed of a large subunit (PMDh-L) and a small subunit (PMDh-S).

It carries out the reaction (R)-5-phosphomevalonate = (2E)-3-methyl-5-phosphooxypent-2-enoate + H2O. It participates in isoprenoid biosynthesis; isopentenyl diphosphate biosynthesis via mevalonate pathway. Component of a hydro-lyase that catalyzes the dehydration of mevalonate 5-phosphate (MVA5P) to form trans-anhydromevalonate 5-phosphate (tAHMP). Involved in the archaeal mevalonate (MVA) pathway, which provides fundamental precursors for isoprenoid biosynthesis, such as isopentenyl diphosphate (IPP) and dimethylallyl diphosphate (DMAPP). This Thermococcus sibiricus (strain DSM 12597 / MM 739) protein is Phosphomevalonate dehydratase small subunit.